A 281-amino-acid chain; its full sequence is Phosphatidylglycerol--prolipoprotein diacylglyceryl transferase (281 aa).

Helical transmembrane passes span 11-31 (IIFTIGPVSARWYGFMYVISF), 57-77 (LLYAIFLGSCIGGRIGYIIFY), 89-109 (VFYIWEGGMSFHGGLIGAIIV), 121-141 (ILEISDFITPLIPFGLGAGRI), 194-214 (PTQLYEFFLEGILLFFIIYFF), 222-242 (GSISGLFLIFYGLFRIFIEFF), and 255-275 (IITMGQILSLPMIIAGLIIMY). A 1,2-diacyl-sn-glycero-3-phospho-(1'-sn-glycerol) is bound at residue arginine 140.

Belongs to the Lgt family.

Its subcellular location is the cell inner membrane. It carries out the reaction L-cysteinyl-[prolipoprotein] + a 1,2-diacyl-sn-glycero-3-phospho-(1'-sn-glycerol) = an S-1,2-diacyl-sn-glyceryl-L-cysteinyl-[prolipoprotein] + sn-glycerol 1-phosphate + H(+). It participates in protein modification; lipoprotein biosynthesis (diacylglyceryl transfer). Catalyzes the transfer of the diacylglyceryl group from phosphatidylglycerol to the sulfhydryl group of the N-terminal cysteine of a prolipoprotein, the first step in the formation of mature lipoproteins. This Buchnera aphidicola subsp. Acyrthosiphon pisum (strain Tuc7) protein is Phosphatidylglycerol--prolipoprotein diacylglyceryl transferase.